The sequence spans 165 residues: Phosphopantetheine adenylyltransferase (165 aa).

Residue serine 10 coordinates substrate. ATP is bound by residues 10–11 (SF) and histidine 18. The substrate site is built by lysine 42, leucine 74, and arginine 88. ATP is bound by residues 89–91 (GLR), glutamate 99, and 124–130 (YSFISSS).

The protein belongs to the bacterial CoaD family. As to quaternary structure, homohexamer. It depends on Mg(2+) as a cofactor.

Its subcellular location is the cytoplasm. It carries out the reaction (R)-4'-phosphopantetheine + ATP + H(+) = 3'-dephospho-CoA + diphosphate. Its pathway is cofactor biosynthesis; coenzyme A biosynthesis; CoA from (R)-pantothenate: step 4/5. In terms of biological role, reversibly transfers an adenylyl group from ATP to 4'-phosphopantetheine, yielding dephospho-CoA (dPCoA) and pyrophosphate. The polypeptide is Phosphopantetheine adenylyltransferase (Macrococcus caseolyticus (strain JCSC5402) (Macrococcoides caseolyticum)).